We begin with the raw amino-acid sequence, 814 residues long: Lon protease 1 (814 aa).

Residues 1–17 (MTDDRDKTNEDPEKIIE) are compositionally biased toward basic and acidic residues. Residues 1–28 (MTDDRDKTNEDPEKIIEADFNPEDPDDA) form a disordered region. The region spanning 49-245 (LPIIPLRPRP…KVLVLLKKEL (197 aa)) is the Lon N-terminal domain. 398 to 405 (GPPGVGKT) is an ATP binding site. The Lon proteolytic domain maps to 633-814 (EDVPGVVTGL…YRDVYQVAFG (182 aa)). Active-site residues include Ser-721 and Lys-764.

It belongs to the peptidase S16 family. In terms of assembly, homohexamer. Organized in a ring with a central cavity.

It localises to the cytoplasm. The enzyme catalyses Hydrolysis of proteins in presence of ATP.. Its function is as follows. ATP-dependent serine protease that mediates the selective degradation of mutant and abnormal proteins as well as certain short-lived regulatory proteins. Required for cellular homeostasis and for survival from DNA damage and developmental changes induced by stress. Degrades polypeptides processively to yield small peptide fragments that are 5 to 10 amino acids long. Binds to DNA in a double-stranded, site-specific manner. The sequence is that of Lon protease 1 from Syntrophotalea carbinolica (strain DSM 2380 / NBRC 103641 / GraBd1) (Pelobacter carbinolicus).